The primary structure comprises 180 residues: Pyruvate synthase subunit PorC (180 aa).

Heterotetramer of one alpha, one beta, one delta and one gamma chain.

It catalyses the reaction 2 oxidized [2Fe-2S]-[ferredoxin] + pyruvate + CoA = 2 reduced [2Fe-2S]-[ferredoxin] + acetyl-CoA + CO2 + H(+). This Methanothermobacter thermautotrophicus (strain ATCC 29096 / DSM 1053 / JCM 10044 / NBRC 100330 / Delta H) (Methanobacterium thermoautotrophicum) protein is Pyruvate synthase subunit PorC (porC).